The following is a 562-amino-acid chain: Scaffold protein FimL (562 aa).

Interacts with PilG and FimV.

It localises to the cytoplasm. Functionally, regulates multiple virulence functions including type IV pilus (T4P)-mediated assembly and twitching motility as well as cAMP-dependent virulence gene expression. Regulates intracellular cyclic AMP (cAMP) levels through the activation of adenylate cyclase CyaB. Also functions as a scaffold linking FimV and PilG at the pole, where type IV pilus (T4P), the Chp chemosensory system and the CyaB adenylate cyclase interact. The sequence is that of Scaffold protein FimL (fimL) from Pseudomonas aeruginosa (strain ATCC 15692 / DSM 22644 / CIP 104116 / JCM 14847 / LMG 12228 / 1C / PRS 101 / PAO1).